The primary structure comprises 489 residues: Cobyric acid synthase (489 aa).

A GATase cobBQ-type domain is found at 251 to 444; it reads GLIIAVIRLP…LHGIFANDTF (194 aa). C329 functions as the Nucleophile in the catalytic mechanism. H436 is an active-site residue.

This sequence belongs to the CobB/CobQ family. CobQ subfamily.

The protein operates within cofactor biosynthesis; adenosylcobalamin biosynthesis. Its function is as follows. Catalyzes amidations at positions B, D, E, and G on adenosylcobyrinic A,C-diamide. NH(2) groups are provided by glutamine, and one molecule of ATP is hydrogenolyzed for each amidation. The polypeptide is Cobyric acid synthase (Chloroflexus aurantiacus (strain ATCC 29366 / DSM 635 / J-10-fl)).